The chain runs to 565 residues: Heme/hemopexin transporter protein HuxB (565 aa).

Positions 1 to 26 are cleaved as a signal peptide; it reads MKMRPRYSVIASAVSLGFVLSKSVMA. The POTRA domain maps to 73–150; the sequence is FPLTQVQILD…GTVKILLLKG (78 aa).

This sequence belongs to the TPS (TC 1.B.20) family.

The protein localises to the cell outer membrane. Its function is as follows. Likely functions in the release of soluble HxuA from the cell. In terms of biological role, probable member of a two partner secretion pathway (TPS) in which it mediates the secretion of HuxA. The chain is Heme/hemopexin transporter protein HuxB (hxuB) from Haemophilus influenzae (strain 86-028NP).